The sequence spans 314 residues: uncharacterized protein (314 aa).

Residues 192 to 289 form the HTH araC/xylS-type domain; sequence TEVKLHIKDN…GSSPGLFRSL (98 aa). 2 consecutive DNA-binding regions (H-T-H motif) follow at residues 209-230 and 257-279; these read TDVA…AAEL and IKEI…SAKI.

This is an uncharacterized protein from Bacillus subtilis (strain 168).